The chain runs to 443 residues: Chromosomal replication initiator protein DnaA (443 aa).

A domain I, interacts with DnaA modulators region spans residues M1–F67. Residues F67–G105 are domain II. Positions N106–A323 are domain III, AAA+ region. Positions 151, 153, 154, and 155 each coordinate ATP. Residues N324–E443 form a domain IV, binds dsDNA region.

Belongs to the DnaA family. Oligomerizes as a right-handed, spiral filament on DNA at oriC.

The protein resides in the cytoplasm. Its function is as follows. Plays an essential role in the initiation and regulation of chromosomal replication. ATP-DnaA binds to the origin of replication (oriC) to initiate formation of the DNA replication initiation complex once per cell cycle. Binds the DnaA box (a 9 base pair repeat at the origin) and separates the double-stranded (ds)DNA. Forms a right-handed helical filament on oriC DNA; dsDNA binds to the exterior of the filament while single-stranded (ss)DNA is stabiized in the filament's interior. The ATP-DnaA-oriC complex binds and stabilizes one strand of the AT-rich DNA unwinding element (DUE), permitting loading of DNA polymerase. After initiation quickly degrades to an ADP-DnaA complex that is not apt for DNA replication. Binds acidic phospholipids. This Stenotrophomonas maltophilia (strain R551-3) protein is Chromosomal replication initiator protein DnaA.